Here is a 132-residue protein sequence, read N- to C-terminus: Small ribosomal subunit protein uS8 (132 aa).

The protein belongs to the universal ribosomal protein uS8 family. As to quaternary structure, part of the 30S ribosomal subunit. Contacts proteins S5 and S12.

Functionally, one of the primary rRNA binding proteins, it binds directly to 16S rRNA central domain where it helps coordinate assembly of the platform of the 30S subunit. This chain is Small ribosomal subunit protein uS8, found in Rhizobium etli (strain CIAT 652).